Here is a 2699-residue protein sequence, read N- to C-terminus: UPF0648 protein C3H5.09c (2699 aa).

An N-linked (GlcNAc...) asparagine glycan is attached at asparagine 21. The helical transmembrane segment at 24-44 (FVWVVIATGFLFHLVLFVLSY) threads the bilayer. N-linked (GlcNAc...) asparagine glycosylation is found at asparagine 288, asparagine 293, asparagine 334, asparagine 345, asparagine 433, asparagine 507, asparagine 551, asparagine 655, asparagine 760, asparagine 993, asparagine 1000, asparagine 1003, asparagine 1006, and asparagine 1009. The tract at residues 975–1021 (KAKDPSPKSASESSSFYQNGSDIDDNDSNSSNTSNHTTENANAQQRK) is disordered. The span at 981–995 (PKSASESSSFYQNGS) shows a compositional bias: low complexity. Residues 1006 to 1033 (NTSNHTTENANAQQRKLEDLNRSFEDFL) are a coiled coil. The span at 1010–1019 (HTTENANAQQ) shows a compositional bias: polar residues. Residues asparagine 1026, asparagine 1039, asparagine 1046, asparagine 1236, asparagine 1255, asparagine 1344, asparagine 1527, asparagine 1595, asparagine 1791, asparagine 1916, asparagine 2032, asparagine 2048, asparagine 2256, asparagine 2285, asparagine 2388, asparagine 2407, asparagine 2417, asparagine 2508, and asparagine 2622 are each glycosylated (N-linked (GlcNAc...) asparagine). The stretch at 1758 to 1818 (QYELLQKRRK…TLSDHYRLLE (61 aa)) forms a coiled coil. The interval 2393–2447 (FPHIYSRNHDKRKENGSQGEADNSNYSGSLMRRRTNDQEEDALATPSSSRRDSRS) is disordered. The segment covering 2408–2420 (GSQGEADNSNYSG) has biased composition (polar residues). 2 disordered regions span residues 2606 to 2632 (AEEN…LNSP) and 2647 to 2676 (ADIV…ARVD). Positions 2617-2632 (SAISRNHSTRSSLNSP) are enriched in polar residues.

It belongs to the UPF0648 family.

The protein resides in the membrane. The chain is UPF0648 protein C3H5.09c from Schizosaccharomyces pombe (strain 972 / ATCC 24843) (Fission yeast).